We begin with the raw amino-acid sequence, 898 residues long: Putative disease resistance protein At1g63350 (898 aa).

Positions 24-88 (VSYTHNLEKN…IESRVNDLLN (65 aa)) form a coiled coil. The NB-ARC domain maps to 137 to 440 (DQASTSEVEE…CEEIIDGSEG (304 aa)). Position 179–186 (179–186 (GMGGVGKT)) interacts with ATP. 6 LRR repeats span residues 516–537 (VVRR…LDCM), 538–559 (ELTT…FFNS), 562–584 (KLAV…ISEL), 586–608 (SLQY…QELK), 609–631 (KLIH…SCLH), and 632–654 (NLKV…KELE).

Belongs to the disease resistance NB-LRR family.

Potential disease resistance protein. The chain is Putative disease resistance protein At1g63350 from Arabidopsis thaliana (Mouse-ear cress).